The primary structure comprises 261 residues: Carnitinyl-CoA dehydratase (261 aa).

Glu111 acts as the Nucleophile in catalysis. Glu131 serves as the catalytic Proton acceptor.

Belongs to the enoyl-CoA hydratase/isomerase family.

It carries out the reaction (R)-carnitinyl-CoA = crotonobetainyl-CoA + H2O. It participates in amine and polyamine metabolism; carnitine metabolism. Functionally, catalyzes the reversible dehydration of L-carnitinyl-CoA to crotonobetainyl-CoA. This Salmonella paratyphi C (strain RKS4594) protein is Carnitinyl-CoA dehydratase.